The following is a 126-amino-acid chain: Large ribosomal subunit protein bL21 (126 aa).

A disordered region spans residues 105–126; sequence KKPSVGPRAKRTKAAPAAEAAE.

In terms of assembly, contacts protein L20. Part of the 50S ribosomal subunit.

Its function is as follows. This protein binds to 23S rRNA in the presence of protein L20. In Rhodopseudomonas palustris (strain ATCC BAA-98 / CGA009), this protein is Large ribosomal subunit protein bL21.